A 131-amino-acid chain; its full sequence is Small ribosomal subunit protein uS8 (131 aa).

It belongs to the universal ribosomal protein uS8 family. Part of the 30S ribosomal subunit. Contacts proteins S5 and S12.

In terms of biological role, one of the primary rRNA binding proteins, it binds directly to 16S rRNA central domain where it helps coordinate assembly of the platform of the 30S subunit. The sequence is that of Small ribosomal subunit protein uS8 from Acinetobacter baylyi (strain ATCC 33305 / BD413 / ADP1).